The chain runs to 443 residues: Sensor histidine protein kinase HK06 (443 aa).

The next 2 helical transmembrane spans lie at 16–36 (FAILGGVGLVIHIAIYLTFPF) and 140–160 (ILLLYLPYTFLVTIAFSFVFS). The HAMP domain maps to 165–217 (KRLLNPLFYISEVTSKMQDLDDNIRFDESRKDEVGEVGKQINGMYEHLLKVIH). The Histidine kinase domain occupies 239–443 (GASHELKTPL…EHGMEFKISL (205 aa)). His242 is subject to Phosphohistidine; by autocatalysis.

Its subcellular location is the cell membrane. It carries out the reaction ATP + protein L-histidine = ADP + protein N-phospho-L-histidine.. Member of the two-component regulatory system HK06/RR06 involved in regulation of target genes, including choline-binding protein CbpA. Has been shown in one study to not be required for regulation of expression of choline-binding protein CbpA. The polypeptide is Sensor histidine protein kinase HK06 (Streptococcus pneumoniae serotype 2 (strain D39 / NCTC 7466)).